Consider the following 560-residue polypeptide: MAHSKEIPSFRWTQSLRRELGMFTEPTKSSVLNDAKLIADSLDFTQVSQVQRLLRKSKRGDTDLDKLRDLNKEVDRLMSMKSVQNNTVLKVGDLGKDELMDLASDLEKLKKKIGDRESNSPRMYMGNLTQSQLEKRAGILRTLGFQQQRGAAGGVVRLWDVSDPSKLNNQFGSMPALTIACMTVQGGETMNNVVQALTSLGLLYTVKYPNLDDLEKLTLEHDCLQIITKDESALNISGYNFSLSAAVKAGASLIDGGNMLETIKVTPNNFSSIVKAALNVKRREGMFIDERPGNRNPYENLLYKLCLSGEGWPYIGSRSQILGRSWDNTSVDLNARPVTGPRAPEKNGQNIRLSNLSEMQEAIVKEAMRKLDSSDTIWMDIEGPPTDPVELAVFQPSSGNYVHCFRKPHDEKGFKNGSRHSHGILLKDLEDAQPGLLSYVIGLLPQGSVITVQGADDIKKLFDIHGRKDLKLVDVRLTGEQSRIFEQEVWEKFGHLCRAHNGVIVPKKKNKEANSTKEPHCALLDCIMFQSVLDGHLPDTIPIQLLPNTLVFQAKSAFVM.

The interval 54–236 (LRKSKRGDTD…ITKDESALNI (183 aa)) is binding site for the cap structure m7GTP. Mn(2+) contacts are provided by D380 and E382. 4 residues coordinate Zn(2+): E390, C497, H500, and C521. Mn(2+) is bound at residue D525.

It belongs to the arenaviridae nucleocapsid protein family. Homomultimerizes to form the nucleocapsid. Binds to viral genomic RNA. Interacts with glycoprotein G2. Interacts with protein Z; this interaction probably directs the encapsidated genome to budding sites. Interacts with protein L; this interaction does not interfere with Z-L interaction. Interacts with host IKBKE (via Protein kinase domain); the interaction inhibits IKBKE kinase activity.

Its subcellular location is the virion. The protein resides in the host cytoplasm. Its function is as follows. Encapsidates the genome, protecting it from nucleases. The encapsidated genomic RNA is termed the nucleocapsid (NC). Serves as template for viral transcription and replication. The increased presence of protein N in host cell does not seem to trigger the switch from transcription to replication as observed in other negative strain RNA viruses. Through the interaction with host IKBKE, strongly inhibits the phosphorylation and nuclear translocation of host IRF3, a protein involved in interferon activation pathway, leading to the inhibition of interferon-beta and IRF3-dependent promoters activation. Also encodes a functional 3'-5' exoribonuclease that degrades preferentially dsRNA substrates and thereby participates in the suppression of interferon induction. In Homo sapiens (Human), this protein is Nucleoprotein.